A 1344-amino-acid chain; its full sequence is Myb-binding protein 1A (1344 aa).

Positions 1 to 24 (MAEMKSPTKAEPASPAEAPQGDRR) are disordered. An N-acetylalanine modification is found at alanine 2. The interval 2–580 (AEMKSPTKAE…WDQMMSTLKE (579 aa)) is interaction with MYB. Serine 14 carries the post-translational modification Phosphoserine. N6-acetyllysine occurs at positions 69 and 156. Short sequence motifs (nuclear export signal) lie at residues 238–256 (SEDN…ANSV) and 261–279 (KLPD…ENKF). Disordered regions lie at residues 696–752 (NEDE…DVDP) and 1150–1344 (PKSE…VQTP). Over residues 708–730 (TDEKQLKHGEDADSDSEDSKNSE) the composition is skewed to basic and acidic residues. Residues 731-746 (SDVDSEDGEESEEEDR) are compositionally biased toward acidic residues. Positions 1150-1161 (PKSEKKNVKDIP) are enriched in basic and acidic residues. Lysine 1151 participates in a covalent cross-link: Glycyl lysine isopeptide (Lys-Gly) (interchain with G-Cter in SUMO2). The interval 1154 to 1344 (KKNVKDIPSD…RVARRRVQTP (191 aa)) is required for nuclear and nucleolar localization. Serine 1162 and serine 1166 each carry phosphoserine. Positions 1170–1187 (TKRKKKGFLPETKKRKKL) are enriched in basic residues. Serine 1189 carries the post-translational modification Phosphoserine. The residue at position 1193 (threonine 1193) is a Phosphothreonine. Serine 1221 and serine 1246 each carry phosphoserine. A compositionally biased stretch (low complexity) spans 1247-1256 (PAPNNPTLSP). A Phosphothreonine modification is found at threonine 1253. The residue at position 1255 (serine 1255) is a Phosphoserine. 2 positions are modified to phosphothreonine: threonine 1258 and threonine 1280. Phosphoserine occurs at positions 1283, 1305, and 1318. A compositionally biased stretch (basic residues) spans 1301–1316 (VKRRSSQSALPKKRAR). The span at 1317–1329 (LSLVSRSPSLLQS) shows a compositional bias: low complexity. Arginine 1322 is modified (citrulline). A phosphoserine mark is found at serine 1323, serine 1325, and serine 1329. Over residues 1331-1344 (IRKRRVARRRVQTP) the composition is skewed to basic residues.

Belongs to the MYBBP1A family. Binds to and represses JUN and MYB via the leucine zipper regions present in these proteins. Also binds to and represses PPARGC1A: this interaction is abrogated when PPARGC1A is phosphorylated by MAPK1/ERK. Binds to and stimulates transcription by AHR. Binds to KPNA2. Component of the B-WICH complex, at least composed of SMARCA5/SNF2H, BAZ1B/WSTF, SF3B1, DEK, MYO1C, ERCC6, MYBBP1A and DDX21. Interacts with CLOCK and CRY1. Post-translationally, citrullinated by PADI4.

The protein localises to the nucleus. Its subcellular location is the nucleolus. The protein resides in the cytoplasm. In terms of biological role, may activate or repress transcription via interactions with sequence specific DNA-binding proteins. Repression may be mediated at least in part by histone deacetylase activity (HDAC activity). Acts as a corepressor and in concert with CRY1, represses the transcription of the core circadian clock component PER2. Preferentially binds to dimethylated histone H3 'Lys-9' (H3K9me2) on the PER2 promoter. Has a role in rRNA biogenesis together with PWP1. In Rattus norvegicus (Rat), this protein is Myb-binding protein 1A (Mybbp1a).